The primary structure comprises 88 residues: Small ribosomal subunit protein uS17 (88 aa).

The protein belongs to the universal ribosomal protein uS17 family. As to quaternary structure, part of the 30S ribosomal subunit.

Functionally, one of the primary rRNA binding proteins, it binds specifically to the 5'-end of 16S ribosomal RNA. This Lawsonia intracellularis (strain PHE/MN1-00) protein is Small ribosomal subunit protein uS17.